The sequence spans 446 residues: Maltoporin (446 aa).

A signal peptide spans methionine 1–alanine 25.

Belongs to the porin LamB (TC 1.B.3) family. As to quaternary structure, homotrimer formed of three 18-stranded antiparallel beta-barrels, containing three independent channels.

The protein localises to the cell outer membrane. It carries out the reaction beta-maltose(in) = beta-maltose(out). In terms of biological role, involved in the transport of maltose and maltodextrins. The polypeptide is Maltoporin (Escherichia coli (strain K12 / MC4100 / BW2952)).